The sequence spans 178 residues: Inner membrane-spanning protein YciB (178 aa).

Transmembrane regions (helical) follow at residues 12–32 (LFFA…VAIV), 50–70 (PMQW…LVLH), 74–94 (FIMW…LISD), 120–140 (LTFA…FVAF), and 145–165 (AVWV…FVLA).

Belongs to the YciB family.

The protein localises to the cell inner membrane. Plays a role in cell envelope biogenesis, maintenance of cell envelope integrity and membrane homeostasis. In Laribacter hongkongensis (strain HLHK9), this protein is Inner membrane-spanning protein YciB.